A 343-amino-acid polypeptide reads, in one-letter code: Holliday junction branch migration complex subunit RuvB (343 aa).

The tract at residues 1–181 (MDRIIDSAAT…FGIVQRLEFY (181 aa)) is large ATPase domain (RuvB-L). ATP is bound by residues isoleucine 20, arginine 21, glycine 62, lysine 65, threonine 66, threonine 67, 128-130 (EDF), arginine 171, tyrosine 181, and arginine 218. Threonine 66 lines the Mg(2+) pocket. Residues 182–252 (SPEDLARIVR…VAQAAMQMLK (71 aa)) are small ATPAse domain (RuvB-S). Positions 255 to 343 (QGGFDELDRR…SAFTDPEDLF (89 aa)) are head domain (RuvB-H). The DNA site is built by arginine 291, arginine 310, and arginine 315.

It belongs to the RuvB family. As to quaternary structure, homohexamer. Forms an RuvA(8)-RuvB(12)-Holliday junction (HJ) complex. HJ DNA is sandwiched between 2 RuvA tetramers; dsDNA enters through RuvA and exits via RuvB. An RuvB hexamer assembles on each DNA strand where it exits the tetramer. Each RuvB hexamer is contacted by two RuvA subunits (via domain III) on 2 adjacent RuvB subunits; this complex drives branch migration. In the full resolvosome a probable DNA-RuvA(4)-RuvB(12)-RuvC(2) complex forms which resolves the HJ.

Its subcellular location is the cytoplasm. The enzyme catalyses ATP + H2O = ADP + phosphate + H(+). The RuvA-RuvB-RuvC complex processes Holliday junction (HJ) DNA during genetic recombination and DNA repair, while the RuvA-RuvB complex plays an important role in the rescue of blocked DNA replication forks via replication fork reversal (RFR). RuvA specifically binds to HJ cruciform DNA, conferring on it an open structure. The RuvB hexamer acts as an ATP-dependent pump, pulling dsDNA into and through the RuvAB complex. RuvB forms 2 homohexamers on either side of HJ DNA bound by 1 or 2 RuvA tetramers; 4 subunits per hexamer contact DNA at a time. Coordinated motions by a converter formed by DNA-disengaged RuvB subunits stimulates ATP hydrolysis and nucleotide exchange. Immobilization of the converter enables RuvB to convert the ATP-contained energy into a lever motion, pulling 2 nucleotides of DNA out of the RuvA tetramer per ATP hydrolyzed, thus driving DNA branch migration. The RuvB motors rotate together with the DNA substrate, which together with the progressing nucleotide cycle form the mechanistic basis for DNA recombination by continuous HJ branch migration. Branch migration allows RuvC to scan DNA until it finds its consensus sequence, where it cleaves and resolves cruciform DNA. The polypeptide is Holliday junction branch migration complex subunit RuvB (Xylella fastidiosa (strain Temecula1 / ATCC 700964)).